The following is a 212-amino-acid chain: Large ribosomal subunit protein uL3 (212 aa).

The interval 127-161 (NFKRGPMAHGSKNHRLPGSTGAGTTPGRVFPGKRM) is disordered.

The protein belongs to the universal ribosomal protein uL3 family. In terms of assembly, part of the 50S ribosomal subunit. Forms a cluster with proteins L14 and L19.

Functionally, one of the primary rRNA binding proteins, it binds directly near the 3'-end of the 23S rRNA, where it nucleates assembly of the 50S subunit. The protein is Large ribosomal subunit protein uL3 of Thermosynechococcus vestitus (strain NIES-2133 / IAM M-273 / BP-1).